A 365-amino-acid chain; its full sequence is Cyclin-O protein B (365 aa).

The interval 22–64 (SGKRKRDSVYSPGDATPGDRGEGEPKCPSVGTKKRAKYSRHRK) is disordered. The segment covering 53–64 (TKKRAKYSRHRK) has biased composition (basic residues).

This sequence belongs to the cyclin family.

It is found in the cytoplasm. Specifically required for generation of multiciliated cells, possibly by promoting a cell cycle state compatible with centriole amplification and maturation. Acts downstream of mcidas to promote mother centriole amplification and maturation in preparation for apical docking. The polypeptide is Cyclin-O protein B (ccno-b) (Xenopus laevis (African clawed frog)).